The sequence spans 350 residues: Erythronate-4-phosphate dehydrogenase (350 aa).

Residues serine 45 and threonine 66 each contribute to the substrate site. Residues 124-125 (QV), aspartate 144, 203-205 (ASR), and aspartate 226 each bind NAD(+). The active site involves arginine 205. The active site involves glutamate 231. The Proton donor role is filled by histidine 248. Glycine 251 serves as a coordination point for NAD(+).

Belongs to the D-isomer specific 2-hydroxyacid dehydrogenase family. PdxB subfamily. In terms of assembly, homodimer.

Its subcellular location is the cytoplasm. It carries out the reaction 4-phospho-D-erythronate + NAD(+) = (R)-3-hydroxy-2-oxo-4-phosphooxybutanoate + NADH + H(+). The protein operates within cofactor biosynthesis; pyridoxine 5'-phosphate biosynthesis; pyridoxine 5'-phosphate from D-erythrose 4-phosphate: step 2/5. In terms of biological role, catalyzes the oxidation of erythronate-4-phosphate to 3-hydroxy-2-oxo-4-phosphonooxybutanoate. This is Erythronate-4-phosphate dehydrogenase from Legionella pneumophila subsp. pneumophila (strain Philadelphia 1 / ATCC 33152 / DSM 7513).